The primary structure comprises 437 residues: Enolase (437 aa).

Q162 contacts (2R)-2-phosphoglycerate. The Proton donor role is filled by E204. Positions 251, 297, and 324 each coordinate Mg(2+). The (2R)-2-phosphoglycerate site is built by K349, R378, S379, and K400. K349 functions as the Proton acceptor in the catalytic mechanism.

The protein belongs to the enolase family. The cofactor is Mg(2+).

Its subcellular location is the cytoplasm. The protein resides in the secreted. It is found in the cell surface. It catalyses the reaction (2R)-2-phosphoglycerate = phosphoenolpyruvate + H2O. It functions in the pathway carbohydrate degradation; glycolysis; pyruvate from D-glyceraldehyde 3-phosphate: step 4/5. Its function is as follows. Catalyzes the reversible conversion of 2-phosphoglycerate (2-PG) into phosphoenolpyruvate (PEP). It is essential for the degradation of carbohydrates via glycolysis. This chain is Enolase, found in Prosthecochloris aestuarii (strain DSM 271 / SK 413).